Consider the following 701-residue polypeptide: Type 3 secretion system secretin (701 aa).

The first 21 residues, M1–A21, serve as a signal peptide directing secretion. The span at R229–S238 shows a compositional bias: gly residues. The disordered stretch occupies residues R229–D252. The segment covering D240–D252 has biased composition (polar residues).

It belongs to the bacterial secretin family. T3SS SctC subfamily. In terms of assembly, the core secretion machinery of the T3SS is composed of approximately 20 different proteins, including cytoplasmic components, a base, an export apparatus and a needle. This subunit is part of the base, which anchors the injectisome in the bacterial cell envelope. Forms a stable homooligomeric complex.

Its subcellular location is the cell outer membrane. Functionally, component of the type III secretion system (T3SS), also called injectisome, which is used to inject bacterial effector proteins into eukaryotic host cells. Forms a ring-shaped multimeric structure with an apparent central pore in the outer membrane. Involved in the secretion of a proteinaceous elicitor of the hypersensitivity response in plants. The sequence is that of Type 3 secretion system secretin from Pseudomonas syringae pv. syringae.